Consider the following 262-residue polypeptide: MRFGLNIDHIVTLREIRKTYEPEILEALFIAKNTHKVDLITIHLREDKRHIQNEDVLRLLEISPLPINIECSINATITDFLCSLKNKPSKVTIVPENRNEVTTEGGLDCSLKGLEEVIRAYHNKGIEVSLFIDPLKDSLHFAREHQVKQVEFHTGVYANLHNALYSNANNQIHAISALKDKSPKELKEELHNAFLQLRRMSKEAFFMGITACAGHGLNYTNVKELLKIPSLRELNIGHSVVSKAVLVGLEKAILEMAQLIKR.

Asparagine 6 is a binding site for 3-amino-2-oxopropyl phosphate. 8–9 serves as a coordination point for 1-deoxy-D-xylulose 5-phosphate; it reads DH. Arginine 17 lines the 3-amino-2-oxopropyl phosphate pocket. Histidine 43 serves as the catalytic Proton acceptor. 1-deoxy-D-xylulose 5-phosphate is bound by residues arginine 45 and histidine 50. The Proton acceptor role is filled by glutamate 70. Threonine 102 is a binding site for 1-deoxy-D-xylulose 5-phosphate. Histidine 215 serves as the catalytic Proton donor. Residues glycine 216 and 237–238 each bind 3-amino-2-oxopropyl phosphate; that span reads GH.

Belongs to the PNP synthase family. In terms of assembly, homooctamer; tetramer of dimers.

Its subcellular location is the cytoplasm. It carries out the reaction 3-amino-2-oxopropyl phosphate + 1-deoxy-D-xylulose 5-phosphate = pyridoxine 5'-phosphate + phosphate + 2 H2O + H(+). Its pathway is cofactor biosynthesis; pyridoxine 5'-phosphate biosynthesis; pyridoxine 5'-phosphate from D-erythrose 4-phosphate: step 5/5. Its function is as follows. Catalyzes the complicated ring closure reaction between the two acyclic compounds 1-deoxy-D-xylulose-5-phosphate (DXP) and 3-amino-2-oxopropyl phosphate (1-amino-acetone-3-phosphate or AAP) to form pyridoxine 5'-phosphate (PNP) and inorganic phosphate. The sequence is that of Pyridoxine 5'-phosphate synthase from Helicobacter pylori (strain P12).